The following is a 406-amino-acid chain: 3-oxoacyl-[acyl-carrier-protein] synthase 1 (406 aa).

Residues 1 to 405 (MRRVVITGIG…GTNVSLIVKK (405 aa)) enclose the Ketosynthase family 3 (KS3) domain. Residues Cys164, His299, and His335 each act as for beta-ketoacyl synthase activity in the active site.

The protein belongs to the thiolase-like superfamily. Beta-ketoacyl-ACP synthases family. In terms of assembly, homodimer.

The protein resides in the cytoplasm. The catalysed reaction is a fatty acyl-[ACP] + malonyl-[ACP] + H(+) = a 3-oxoacyl-[ACP] + holo-[ACP] + CO2. It carries out the reaction (3Z)-decenoyl-[ACP] + malonyl-[ACP] + H(+) = 3-oxo-(5Z)-dodecenoyl-[ACP] + holo-[ACP] + CO2. Its pathway is lipid metabolism; fatty acid biosynthesis. Functionally, involved in the type II fatty acid elongation cycle. Catalyzes the elongation of a wide range of acyl-ACP by the addition of two carbons from malonyl-ACP to an acyl acceptor. Can also use unsaturated fatty acids. Catalyzes a key reaction in unsaturated fatty acid (UFA) synthesis, the elongation of the cis-3-decenoyl-ACP produced by FabA. This chain is 3-oxoacyl-[acyl-carrier-protein] synthase 1 (fabB), found in Buchnera aphidicola subsp. Acyrthosiphon pisum (strain APS) (Acyrthosiphon pisum symbiotic bacterium).